The following is a 519-amino-acid chain: Putative ATP-dependent RNA helicase L396 (519 aa).

The Helicase ATP-binding domain occupies 110–258; it reads IKGMEEGGGG…IINWYMGPIL (149 aa). Residue 123–130 participates in ATP binding; sequence MGCGSGKT. The DEAH box motif lies at 211–214; sequence DEVH. The 141-residue stretch at 317 to 457 folds into the Helicase C-terminal domain; that stretch reads YLIQELFDMG…KQKYNIQKYY (141 aa).

It belongs to the DEAD box helicase family. DEAH subfamily.

The catalysed reaction is ATP + H2O = ADP + phosphate + H(+). The protein is Putative ATP-dependent RNA helicase L396 of Acanthamoeba polyphaga (Amoeba).